Consider the following 167-residue polypeptide: Xanthine-guanine phosphoribosyltransferase (167 aa).

Residues 47–48, Q79, and 102–110 each bind 5-phospho-alpha-D-ribose 1-diphosphate; these read RG and DDLVDSGKT. Residue Q79 coordinates GMP. D103 lines the Mg(2+) pocket. Residues D106 and I149 each coordinate guanine. The xanthine site is built by D106 and I149. GMP is bound by residues 106–110 and 148–149; these read DSGKT and WI.

The protein belongs to the purine/pyrimidine phosphoribosyltransferase family. XGPT subfamily. As to quaternary structure, homotetramer. Requires Mg(2+) as cofactor.

The protein resides in the cell inner membrane. It catalyses the reaction GMP + diphosphate = guanine + 5-phospho-alpha-D-ribose 1-diphosphate. The enzyme catalyses XMP + diphosphate = xanthine + 5-phospho-alpha-D-ribose 1-diphosphate. It carries out the reaction IMP + diphosphate = hypoxanthine + 5-phospho-alpha-D-ribose 1-diphosphate. Its pathway is purine metabolism; GMP biosynthesis via salvage pathway; GMP from guanine: step 1/1. It participates in purine metabolism; XMP biosynthesis via salvage pathway; XMP from xanthine: step 1/1. Functionally, purine salvage pathway enzyme that catalyzes the transfer of the ribosyl-5-phosphate group from 5-phospho-alpha-D-ribose 1-diphosphate (PRPP) to the N9 position of the 6-oxopurines guanine and xanthine to form the corresponding ribonucleotides GMP (guanosine 5'-monophosphate) and XMP (xanthosine 5'-monophosphate), with the release of PPi. To a lesser extent, also acts on hypoxanthine. In Cereibacter sphaeroides (strain ATCC 17025 / ATH 2.4.3) (Rhodobacter sphaeroides), this protein is Xanthine-guanine phosphoribosyltransferase.